Here is a 316-residue protein sequence, read N- to C-terminus: tRNA dimethylallyltransferase (316 aa).

19–26 (GPTASGKT) provides a ligand contact to ATP. 21–26 (TASGKT) lines the substrate pocket. 3 interaction with substrate tRNA regions span residues 44–47 (DSAL), 168–172 (QRITR), and 249–254 (RCVGYR).

Belongs to the IPP transferase family. In terms of assembly, monomer. The cofactor is Mg(2+).

It carries out the reaction adenosine(37) in tRNA + dimethylallyl diphosphate = N(6)-dimethylallyladenosine(37) in tRNA + diphosphate. Functionally, catalyzes the transfer of a dimethylallyl group onto the adenine at position 37 in tRNAs that read codons beginning with uridine, leading to the formation of N6-(dimethylallyl)adenosine (i(6)A). The protein is tRNA dimethylallyltransferase of Colwellia psychrerythraea (strain 34H / ATCC BAA-681) (Vibrio psychroerythus).